The following is a 1199-amino-acid chain: AP-3 complex subunit delta-1 (1199 aa).

Ala2 carries the N-acetylalanine modification. HEAT repeat units follow at residues 34–71 (KYIS…LGYD), 142–179 (DLAR…KYPE), 180–216 (SLRP…RNPK), 218–254 (YLSL…LEPR), 257–296 (KKLI…GMPN), 298–336 (SASI…THPK), 337–373 (SVQS…KKNL), 375–409 (EIVK…QSNY), and 521–558 (VYVQ…ERLP). Disordered stretches follow at residues 623–695 (LDAW…RYQD) and 724–963 (YVKL…EPIP). 3 positions are modified to phosphoserine: Ser632, Ser634, and Ser636. Composition is skewed to basic and acidic residues over residues 639–651 (EKPK…EEPR) and 665–675 (LARRREARKQE). Residues 659 to 679 (EEDEEELARRREARKQEQANN) adopt a coiled-coil conformation. A Phosphoserine modification is found at Ser688. A coiled-coil region spans residues 722–750 (DQYVKLEEQRRHRQRLEKDKKRKKKEKGK). Residues 732–754 (RHRQRLEKDKKRKKKEKGKRRHS) show a composition bias toward basic residues. 2 positions are modified to phosphoserine: Ser754 and Ser755. A Phosphothreonine modification is found at Thr758. A phosphoserine mark is found at Ser760, Ser784, and Ser825. A compositionally biased stretch (acidic residues) spans 773–790 (ITEEMPENALPSDEDDKD). Positions 791–836 (PNDPYRALDIDLDKPLADSEKLPVQKHRNAEAVKSPEKEGVLGVEK) are enriched in basic and acidic residues. The span at 837 to 846 (KSKKPKKKEK) shows a compositional bias: basic residues. A coiled-coil region spans residues 843-863 (KKEKKTKEREREKKDKKGEDL). Residues 847 to 862 (KTKEREREKKDKKGED) are compositionally biased toward basic and acidic residues. Over residues 870–880 (TPPPAAAPIPA) the composition is skewed to pro residues. A compositionally biased stretch (basic and acidic residues) spans 894–916 (PKDECEVLKGEEEDHVDHDQERK). Residues 911–934 (HDQERKSSRHKKKKHRKEKEKEER) are a coiled coil. The span at 917–928 (SSRHKKKKHRKE) shows a compositional bias: basic residues.

The protein belongs to the adaptor complexes large subunit family. In terms of assembly, adaptor protein complex 3 (AP-3) is a heterotetramer composed of two large adaptins (delta-type subunit AP3D1 and beta-type subunit AP3B1 or AP3B2), a medium adaptin (mu-type subunit AP3M1 or AP3M2) and a small adaptin (sigma-type subunit APS1 or AP3S2). AP-3 associates with the BLOC-1 complex. Interacts with SLC30A2. Interacts with CLN3 (via dileucine motif); this interaction facilitates lysosomal targeting.

The protein localises to the cytoplasm. It localises to the golgi apparatus membrane. Part of the AP-3 complex, an adaptor-related complex which is not clathrin-associated. The complex is associated with the Golgi region as well as more peripheral structures. It facilitates the budding of vesicles from the Golgi membrane and may be directly involved in trafficking to lysosomes. Involved in process of CD8+ T-cell and NK cell degranulation. In concert with the BLOC-1 complex, AP-3 is required to target cargos into vesicles assembled at cell bodies for delivery into neurites and nerve terminals. The chain is AP-3 complex subunit delta-1 (Ap3d1) from Mus musculus (Mouse).